The primary structure comprises 714 residues: Phosphate acetyltransferase (714 aa).

The phosphate acetyltransferase stretch occupies residues 391-714 (AFRYQLTELA…LTAIQSAQQQ (324 aa)).

This sequence in the N-terminal section; belongs to the CobB/CobQ family. The protein in the C-terminal section; belongs to the phosphate acetyltransferase and butyryltransferase family. Homohexamer.

It is found in the cytoplasm. It catalyses the reaction acetyl-CoA + phosphate = acetyl phosphate + CoA. It participates in metabolic intermediate biosynthesis; acetyl-CoA biosynthesis; acetyl-CoA from acetate: step 2/2. Inhibited by NADH and ATP. Pyruvate and PEP act as activators of the acetyl phosphate forming reaction while inhibiting the formation of acetyl-CoA. Its function is as follows. Involved in acetate metabolism. Catalyzes the reversible interconversion of acetyl-CoA and acetyl phosphate. The direction of the overall reaction changes depending on growth conditions. On minimal medium acetyl-CoA is generated. In rich medium acetyl-CoA is converted to acetate and allowing the cell to dump the excess of acetylation potential in exchange for energy in the form of ATP. The main pathway for acetate production during exponential phase. The sequence is that of Phosphate acetyltransferase (pta) from Escherichia coli (strain K12).